A 501-amino-acid polypeptide reads, in one-letter code: 2,3-bisphosphoglycerate-independent phosphoglycerate mutase (501 aa).

Mn(2+)-binding residues include Asp10 and Ser60. The active-site Phosphoserine intermediate is Ser60. Substrate contacts are provided by residues His121, 151-152 (RD), Arg182, Arg188, 256-259 (RPDR), and Lys329. Asp394, His398, Asp435, His436, and His453 together coordinate Mn(2+).

It belongs to the BPG-independent phosphoglycerate mutase family. As to quaternary structure, monomer. Mn(2+) is required as a cofactor.

It carries out the reaction (2R)-2-phosphoglycerate = (2R)-3-phosphoglycerate. The protein operates within carbohydrate degradation; glycolysis; pyruvate from D-glyceraldehyde 3-phosphate: step 3/5. Its function is as follows. Catalyzes the interconversion of 2-phosphoglycerate and 3-phosphoglycerate. The polypeptide is 2,3-bisphosphoglycerate-independent phosphoglycerate mutase (Mycoplasmopsis synoviae (strain 53) (Mycoplasma synoviae)).